A 388-amino-acid chain; its full sequence is Leucine aminopeptidase 1 (388 aa).

Positions 1–19 are cleaved as a signal peptide; it reads MKVLTAIALSAIAFTGAVA. A propeptide spanning residues 20–88 is cleaved from the precursor; the sequence is AVITQEAFLN…YPTLHSASYV (69 aa). Asn106 and Asn180 each carry an N-linked (GlcNAc...) asparagine glycan. The Zn(2+) site is built by His188 and Asp207. Residue Asn232 is glycosylated (N-linked (GlcNAc...) asparagine). Residues Glu246 and Asp273 each coordinate Zn(2+). An intrachain disulfide couples Cys322 to Cys326. His355 provides a ligand contact to Zn(2+).

The protein belongs to the peptidase M28 family. M28E subfamily. Monomer. The cofactor is Zn(2+).

The protein resides in the secreted. Functionally, extracellular aminopeptidase that allows assimilation of proteinaceous substrates and which contributes to pathogenicity. This is Leucine aminopeptidase 1 (lap1) from Aspergillus fumigatus (strain CBS 144.89 / FGSC A1163 / CEA10) (Neosartorya fumigata).